The primary structure comprises 310 residues: Small ribosomal subunit protein uS2 (310 aa).

Residues 249-272 (WERDLLEGEKAEKKDDAEAAEKPA) show a composition bias toward basic and acidic residues. The tract at residues 249–310 (WERDLLEGEK…EAPAADAEQA (62 aa)) is disordered. The segment covering 273 to 310 (EAPAAEAPAAEAAEAPAAEAAPAEEPAAEAPAADAEQA) has biased composition (low complexity).

This sequence belongs to the universal ribosomal protein uS2 family.

The protein is Small ribosomal subunit protein uS2 (rpsB) of Streptomyces coelicolor (strain ATCC BAA-471 / A3(2) / M145).